The sequence spans 620 residues: Lamin-B2 (620 aa).

The tract at residues 1–38 (MSPPSPGRRREQRRPRAAATMATPLPGRAGGPATPLSP) is disordered. Residues 1–48 (MSPPSPGRRREQRRPRAAATMATPLPGRAGGPATPLSPTRLSRLQEKE) are head. Phosphothreonine occurs at positions 23 and 34. Position 37 is a phosphoserine (Ser37). The IF rod domain occupies 46-402 (EKEELRELND…KLLEGEEERL (357 aa)). Positions 49 to 83 (ELRELNDRLAHYIDRVRALELENDRLLLKISEKEE) are coil 1A. Residue Lys77 forms a Glycyl lysine isopeptide (Lys-Gly) (interchain with G-Cter in SUMO2) linkage. An N6-acetyllysine; alternate modification is found at Lys81. Lys81 participates in a covalent cross-link: Glycyl lysine isopeptide (Lys-Gly) (interchain with G-Cter in SUMO2); alternate. Residues 84-95 (VTTREVSGIKAL) form a linker 1 region. The segment at 96–229 (YESELADARR…DFRKSVFEEE (134 aa)) is coil 1B. Residues Lys195 and Lys255 each participate in a glycyl lysine isopeptide (Lys-Gly) (interchain with G-Cter in SUMO2) cross-link. Residues 230–256 (VRETRRRHERRLVEVDSSRQQEYDFKM) form a linker 2 region. A coil 2 region spans residues 257-400 (AQALEELRSQ…YRKLLEGEEE (144 aa)). A phosphoserine mark is found at Ser316 and Ser407. Positions 399 to 464 (EERLKLSPSP…GTGGSGGFHL (66 aa)) are disordered. The tract at residues 401–620 (RLKLSPSPSS…RTTSRGCYVM (220 aa)) is tail. The span at 404–431 (LSPSPSSRVTVSRATSSSSGSLSATGRL) shows a compositional bias: low complexity. Thr413 is a glycosylation site (O-linked (GlcNAc) threonine). Phosphoserine is present on residues Ser420, Ser422, Ser424, and Ser426. At Arg433 the chain carries Omega-N-methylarginine. The Nuclear localization signal signature appears at 435 to 440 (KRKRLE). Over residues 444–453 (PLGSGPSVLG) the composition is skewed to low complexity. An LTD domain is found at 462-579 (FHLAQQASAS…EEVAMRTVKK (118 aa)). Residue Lys489 forms a Glycyl lysine isopeptide (Lys-Gly) (interchain with G-Cter in SUMO2) linkage. Ser497 is subject to Phosphoserine. A disordered region spans residues 581–620 (SVMRENENGEEEEEEAEFGEEDLFHQQGDPRTTSRGCYVM). Over residues 588–601 (NGEEEEEEAEFGEE) the composition is skewed to acidic residues. Residues 609–620 (DPRTTSRGCYVM) show a composition bias toward polar residues. Cys617 carries the post-translational modification Cysteine methyl ester. The S-farnesyl cysteine moiety is linked to residue Cys617. Positions 618–620 (YVM) are cleaved as a propeptide — removed in mature form.

The protein belongs to the intermediate filament family. Dimer. Lamin dimers then assemble into dimeric head-to-tail polymers. Ultimately, two head-to-tail polymers assemble laterally into a protofilament with a uniformly shaped rod of 3.5 nm in diameter. Interacts with TMEM43. Post-translationally, B-type lamins undergo a series of modifications, such as farnesylation and phosphorylation. Increased phosphorylation of the lamins occurs before envelope disintegration and probably plays a role in regulating lamin associations. In terms of processing, phosphorylation plays a key role in lamin organization, subcellular localization and nuclear envelope disintegration. Phosphorylation by CDK1 at Ser-37 and Ser-407 at the onset of mitosis drives lamin disassembly and nuclear envelope breakdown.

It is found in the nucleus lamina. Its function is as follows. Lamins are intermediate filament proteins that assemble into a filamentous meshwork, and which constitute the major components of the nuclear lamina, a fibrous layer on the nucleoplasmic side of the inner nuclear membrane. Lamins provide a framework for the nuclear envelope, bridging the nuclear envelope and chromatin, thereby playing an important role in nuclear assembly, chromatin organization, nuclear membrane and telomere dynamics. The structural integrity of the lamina is strictly controlled by the cell cycle, as seen by the disintegration and formation of the nuclear envelope in prophase and telophase, respectively. In Homo sapiens (Human), this protein is Lamin-B2 (LMNB2).